We begin with the raw amino-acid sequence, 239 residues long: Exosome complex component Rrp4 (239 aa).

The 73-residue stretch at 67-139 folds into the S1 motif domain; sequence GDFVVGIVEE…PVQRVELSLL (73 aa). Positions 151–217 constitute a KH domain; that stretch reads QGGQVVEIDP…LAVRAIREIE (67 aa).

This sequence belongs to the RRP4 family. As to quaternary structure, component of the archaeal exosome complex. Forms a trimer of Rrp4 and/or Csl4 subunits. The trimer associates with a hexameric ring-like arrangement composed of 3 Rrp41-Rrp42 heterodimers.

The protein localises to the cytoplasm. In terms of biological role, non-catalytic component of the exosome, which is a complex involved in RNA degradation. Increases the RNA binding and the efficiency of RNA degradation. Confers strong poly(A) specificity to the exosome. The sequence is that of Exosome complex component Rrp4 from Methanopyrus kandleri (strain AV19 / DSM 6324 / JCM 9639 / NBRC 100938).